Here is a 248-residue protein sequence, read N- to C-terminus: Ubiquinone/menaquinone biosynthesis C-methyltransferase UbiE (248 aa).

S-adenosyl-L-methionine contacts are provided by Ser68 and Asp92.

The protein belongs to the class I-like SAM-binding methyltransferase superfamily. MenG/UbiE family.

The catalysed reaction is a 2-demethylmenaquinol + S-adenosyl-L-methionine = a menaquinol + S-adenosyl-L-homocysteine + H(+). It catalyses the reaction a 2-methoxy-6-(all-trans-polyprenyl)benzene-1,4-diol + S-adenosyl-L-methionine = a 5-methoxy-2-methyl-3-(all-trans-polyprenyl)benzene-1,4-diol + S-adenosyl-L-homocysteine + H(+). It functions in the pathway quinol/quinone metabolism; menaquinone biosynthesis; menaquinol from 1,4-dihydroxy-2-naphthoate: step 2/2. It participates in cofactor biosynthesis; ubiquinone biosynthesis. Functionally, methyltransferase required for the conversion of demethylmenaquinol (DMKH2) to menaquinol (MKH2) and the conversion of 2-polyprenyl-6-methoxy-1,4-benzoquinol (DDMQH2) to 2-polyprenyl-3-methyl-6-methoxy-1,4-benzoquinol (DMQH2). In Rickettsia bellii (strain OSU 85-389), this protein is Ubiquinone/menaquinone biosynthesis C-methyltransferase UbiE.